We begin with the raw amino-acid sequence, 270 residues long: Monocyte to macrophage differentiation factor 2 (270 aa).

Topologically, residues 1-38 (MFAPRLLDFQKTKYARFMNHRVPAHKRYQPTEYEHAAN) are cytoplasmic. A helical transmembrane segment spans residues 39–59 (CATHAFWIIPSILGSSNLYFL). Over 60–65 (SDDDWE) the chain is Lumenal. Residues 66–86 (TISAWIYGLGLCGLFVVSTVF) form a helical membrane-spanning segment. Over 87 to 102 (HTISWKKSHLRMVEHC) the chain is Cytoplasmic. A helical membrane pass occupies residues 103–123 (LHMFDRMVIYFFIAASYAPWL). The Lumenal portion of the chain corresponds to 124–132 (NLRELGPWA). A helical transmembrane segment spans residues 133–153 (SHMRWLVWIMASVGTIYVFFF). Over 154 to 182 (HERTGSCVQFLRGEACPKAGTACLPARYK) the chain is Cytoplasmic. The chain crosses the membrane as a helical span at residues 183-203 (LVELLCYVVMGFFPALVILSM). The Lumenal portion of the chain corresponds to 204-205 (PN). A helical transmembrane segment spans residues 206-226 (TEGIWELVTGGVFYCLGMVFF). At 227–233 (KSDGRIP) the chain is on the cytoplasmic side. A helical membrane pass occupies residues 234-254 (FAHAIWHLFVAFGAGTHYYAI). Over 255-270 (WRYLYLPSTLQTKVSK) the chain is Lumenal.

This sequence belongs to the ADIPOR family. In terms of tissue distribution, shows restricted expression with highest levels in brain and testis.

Its subcellular location is the golgi apparatus membrane. This is Monocyte to macrophage differentiation factor 2 from Homo sapiens (Human).